The following is an 831-amino-acid chain: AMP deaminase (831 aa).

Disordered stretches follow at residues 26–45 (NPGA…QDTP), 66–110 (NGTQ…KLLN), and 130–149 (NAVV…METT). S79 and S84 each carry phosphoserine. Residues H319 and H321 each coordinate Zn(2+). Residues H321 and 390-395 (KFNLKY) each bind substrate. H587 contacts Zn(2+). E590 is a binding site for substrate. H609 serves as the catalytic Proton acceptor. D664 lines the Zn(2+) pocket. 665 to 668 (DPLQ) lines the substrate pocket. S758, S776, S780, and S782 each carry phosphoserine.

Belongs to the metallo-dependent hydrolases superfamily. Adenosine and AMP deaminases family. As to quaternary structure, homotetramer. Zn(2+) is required as a cofactor.

The protein resides in the cytoplasm. The enzyme catalyses AMP + H2O + H(+) = IMP + NH4(+). It participates in purine metabolism; IMP biosynthesis via salvage pathway; IMP from AMP: step 1/1. In terms of biological role, AMP deaminase plays a critical role in energy metabolism. The polypeptide is AMP deaminase (ada1) (Schizosaccharomyces pombe (strain 972 / ATCC 24843) (Fission yeast)).